Reading from the N-terminus, the 544-residue chain is Chaperonin GroEL 1 (544 aa).

ATP contacts are provided by residues 30 to 33 (TLGP), Lys-51, 87 to 91 (DGTTT), Gly-415, and Asp-494.

Belongs to the chaperonin (HSP60) family. In terms of assembly, forms a cylinder of 14 subunits composed of two heptameric rings stacked back-to-back. Interacts with the co-chaperonin GroES.

The protein resides in the cytoplasm. The catalysed reaction is ATP + H2O + a folded polypeptide = ADP + phosphate + an unfolded polypeptide.. Its function is as follows. Together with its co-chaperonin GroES, plays an essential role in assisting protein folding. The GroEL-GroES system forms a nano-cage that allows encapsulation of the non-native substrate proteins and provides a physical environment optimized to promote and accelerate protein folding. This is Chaperonin GroEL 1 from Syntrophus aciditrophicus (strain SB).